A 323-amino-acid chain; its full sequence is Muscleblind-like protein 3 (323 aa).

C3H1-type zinc fingers lie at residues 13–41 (WLTL…HPSR), 47–73 (NGRV…HPPP), 177–205 (TDKL…HPLE), and 213–239 (ENSV…HPPA).

This sequence belongs to the muscleblind family. Expressed in fast and slow myotomal muscle, heart, liver, skin, brain and testis.

The protein resides in the nucleus. It localises to the cytoplasm. Functionally, involved in pre-mRNA alternative splicing regulation. Could inhibit terminal muscle differentiation, acting at approximately the time of myogenin induction. The sequence is that of Muscleblind-like protein 3 (mbnl3) from Takifugu rubripes (Japanese pufferfish).